Reading from the N-terminus, the 235-residue chain is Ribonuclease PH (235 aa).

Residues Arg86 and 124–126 contribute to the phosphate site; that span reads GTR.

It belongs to the RNase PH family. Homohexameric ring arranged as a trimer of dimers.

It catalyses the reaction tRNA(n+1) + phosphate = tRNA(n) + a ribonucleoside 5'-diphosphate. Its function is as follows. Phosphorolytic 3'-5' exoribonuclease that plays an important role in tRNA 3'-end maturation. Removes nucleotide residues following the 3'-CCA terminus of tRNAs; can also add nucleotides to the ends of RNA molecules by using nucleoside diphosphates as substrates, but this may not be physiologically important. Probably plays a role in initiation of 16S rRNA degradation (leading to ribosome degradation) during starvation. This chain is Ribonuclease PH, found in Francisella philomiragia subsp. philomiragia (strain ATCC 25017 / CCUG 19701 / FSC 153 / O#319-036).